Reading from the N-terminus, the 485-residue chain is Sodium-coupled neutral amino acid symporter 1 (485 aa).

Residues 1-74 (MMHFKSGLEL…EYIPGTTSLG (74 aa)) lie on the Cytoplasmic side of the membrane. Phosphoserine is present on S6. A Phosphothreonine modification is found at T11. Phosphoserine is present on residues S25, S28, S49, and S52. The residue at position 54 (T54) is a Phosphothreonine. At S56 the chain carries Phosphoserine. Residues 75 to 97 (MSVFNLSNAIMGSGILGLAFALA) form a helical membrane-spanning segment. Over 98–112 (NTGILLFLILLTSVT) the chain is Extracellular. Residues 113–133 (LLSIYSINLLLICSKETGCMV) traverse the membrane as a helical segment. Over 134 to 148 (YEKLGEQVFGTTGKL) the chain is Cytoplasmic. A helical transmembrane segment spans residues 149–169 (VIFGATSLQNTGAMLSYLFIV). Over 170–188 (KNELPSAIKSLMGEEDAFS) the chain is Extracellular. The chain crosses the membrane as a helical span at residues 189 to 211 (AWYVDGRVLVVMVTFGIILPLCL). Over 212–216 (LKNLG) the chain is Cytoplasmic. The chain crosses the membrane as a helical span at residues 217-237 (YLGYTSGFSLSCMMFFLIVVI). Residues 238–273 (YKKFQTPCMSVEQNSTVSANVTDACTPKYVTFNSKT) are Extracellular-facing. Residues C245 and C262 are joined by a disulfide bond. N-linked (GlcNAc...) asparagine glycans are attached at residues N251 and N257. The chain crosses the membrane as a helical span at residues 274-294 (VYALPTIAFAFVCHPSVLPIY). At 295 to 310 (SELKDRSQKKMQMVSN) the chain is on the cytoplasmic side. The chain crosses the membrane as a helical span at residues 311–331 (ISFFAMFVMYFLTAIFGYLTF). The Extracellular portion of the chain corresponds to 332-348 (YEKVQSDLLHKYQSTGD). A helical transmembrane segment spans residues 349-369 (ILILTVRLAVIVAVILTVPVL). Residues 370–391 (FFTVRSSLFELAKKTKFHLCRH) are Cytoplasmic-facing. Residues 392–412 (VLVTIILLIIINLLVIFIPSM) form a helical membrane-spanning segment. Over 413–414 (KD) the chain is Extracellular. A helical transmembrane segment spans residues 415-435 (IFGVVGVTSANMLIFILPSSL). Over 436–450 (YLKITNQDGDKGTQR) the chain is Cytoplasmic. Residues 451–471 (IWAALFLGLGVLFSLISIPLV) traverse the membrane as a helical segment. The Extracellular portion of the chain corresponds to 472 to 485 (IYDWACSSGTDEGH).

It belongs to the amino acid/polyamine transporter 2 family. In terms of processing, N-glycosylation plays an important role in the L-glutamine transport. Specifically expressed in brain and retina (at protein level). Also detected in spleen, small intestine and lung.

It localises to the cell membrane. The catalysed reaction is L-glutamine(in) + Na(+)(in) = L-glutamine(out) + Na(+)(out). It carries out the reaction L-alanine(in) + Na(+)(in) = L-alanine(out) + Na(+)(out). The enzyme catalyses L-histidine(in) + Na(+)(in) = L-histidine(out) + Na(+)(out). It catalyses the reaction L-asparagine(in) + Na(+)(in) = L-asparagine(out) + Na(+)(out). The catalysed reaction is L-serine(in) + Na(+)(in) = L-serine(out) + Na(+)(out). It carries out the reaction L-cysteine(in) + Na(+)(in) = L-cysteine(out) + Na(+)(out). The enzyme catalyses L-methionine(in) + Na(+)(in) = L-methionine(out) + Na(+)(out). It catalyses the reaction glycine(in) + Na(+)(in) = glycine(out) + Na(+)(out). The catalysed reaction is L-threonine(in) + Na(+)(in) = L-threonine(out) + Na(+)(out). It carries out the reaction L-proline(in) + Na(+)(in) = L-proline(out) + Na(+)(out). Inhibited by alpha-(methylamino)isobutyric acid (MeAIB). Inhibited by lithium, potassium, choline ions, N-methylglucamine. The pH dependence has an allosteric effect on the transport. In terms of biological role, symporter that cotransports short-chain neutral amino acids and sodium ions from the extraccellular to the intracellular side of the cell membrane. The transport is elctrogenic, pH dependent and driven by the Na(+) electrochemical gradient. Participates in the astroglia-derived glutamine transport into GABAergic interneurons for neurotransmitter GABA de novo synthesis. May also contributes to amino acid transport in placental trophoblast. Regulates synaptic plasticity. The sequence is that of Sodium-coupled neutral amino acid symporter 1 from Mus musculus (Mouse).